A 763-amino-acid polypeptide reads, in one-letter code: Phosphoglycerol transferase I (763 aa).

Helical transmembrane passes span 1–21 (MSEL…AWKA), 26–46 (WWFA…ITLY), 77–97 (ILPG…LGWI), and 108–128 (VGYS…SPAF).

This sequence belongs to the OpgB family.

It is found in the cell inner membrane. It carries out the reaction a phosphatidylglycerol + a membrane-derived-oligosaccharide D-glucose = a 1,2-diacyl-sn-glycerol + a membrane-derived-oligosaccharide 6-(glycerophospho)-D-glucose.. It functions in the pathway glycan metabolism; osmoregulated periplasmic glucan (OPG) biosynthesis. Transfers a phosphoglycerol residue from phosphatidylglycerol to the membrane-bound nascent glucan backbones. The protein is Phosphoglycerol transferase I of Salmonella newport (strain SL254).